The primary structure comprises 633 residues: MYLGLKVGVTFASSIPAAVISMAVLKFFKDSSILENNMVQTQASSAGTLSSVIFVLPGLLMMGYWQDFPFWQTMLICAAGGTLGVLFTIPLRRAMVVNSNLPYPEGVAAAEILKAGNHADGDSGVKDIAYGGVLAGLVAFLTNGLRVMADGASAWIQTGKAAFQLPMGFSLALLGAGYLIGIVGGIAMLIGVILTWGVAVPYFTMSEDIAADASLIDSAMTVWKTKVRYIGVGTIGIAAIWTLLILMKPMIEGMVHSFRMLKGGQEASEHRIDIDLSPKTMIYILIATVALIVISLHHFIAAAPISPELSILLVVVCTFLAVFIGFFVAAASGYMAGLVGSSSSPISGIGIISVIVISLVLVSIGNASGLFETVDGQKFLTALTLFTASIVITTACISNDNLQDLKTGLLVEATPWRQQVALIIGCFVGALVIAPVLEILYHAYGFSGALPRPDMDPSQALSAPQATLMTAISQGIFTNKLEWTYILTGVGLGAVLITIDAFLKKVSNKVFSLPVIAVGIGIYLPPSINTPVIVGAFLAWIMARHIAKLGNKEVSAKAERFGTLFSAGLIVGESLMGVILAFIIAASVTTGGSEAPLSLNLENWDTIGEWFGLIVFIVGIVIFASRVLRAKKI.

The next 15 helical transmembrane spans lie at 8-28, 45-65, 70-90, 128-148, 180-200, 230-250, 281-301, 311-331, 345-365, 379-399, 420-440, 483-503, 515-535, 564-584, and 604-624; these read GVTFASSIPAAVISMAVLKFF, SAGTLSSVIFVLPGLLMMGYW, FWQTMLICAAGGTLGVLFTIP, IAYGGVLAGLVAFLTNGLRVM, IGIVGGIAMLIGVILTWGVAV, IGVGTIGIAAIWTLLILMKPM, MIYILIATVALIVISLHHFIA, ILLVVVCTFLAVFIGFFVAAA, PISGIGIISVIVISLVLVSIG, FLTALTLFTASIVITTACISN, VALIIGCFVGALVIAPVLEIL, WTYILTGVGLGAVLITIDAFL, VIAVGIGIYLPPSINTPVIVG, LFSAGLIVGESLMGVILAFII, and WDTIGEWFGLIVFIVGIVIFA.

It belongs to the oligopeptide OPT transporter family.

It is found in the cell membrane. The polypeptide is Putative oligopeptide transporter HI_0561 (Haemophilus influenzae (strain ATCC 51907 / DSM 11121 / KW20 / Rd)).